Consider the following 130-residue polypeptide: Large ribosomal subunit protein bL17 (130 aa).

Belongs to the bacterial ribosomal protein bL17 family. In terms of assembly, part of the 50S ribosomal subunit. Contacts protein L32.

The protein is Large ribosomal subunit protein bL17 of Paraburkholderia xenovorans (strain LB400).